Here is a 208-residue protein sequence, read N- to C-terminus: Sodium/potassium-transporting ATPase subunit beta-1-interacting protein 4 (208 aa).

4 consecutive transmembrane segments (helical) span residues 10 to 30 (LILL…FDFL), 35 to 55 (APIL…FGTL), 62 to 82 (VIAY…LICF), and 151 to 171 (ALQI…TSVF).

The protein belongs to the NKAIN family. Interacts with atp1b1 C-terminus.

It localises to the cell membrane. The sequence is that of Sodium/potassium-transporting ATPase subunit beta-1-interacting protein 4 (nkain4) from Xenopus tropicalis (Western clawed frog).